The following is a 212-amino-acid chain: DNA-directed RNA polymerase III subunit RPC8 (212 aa).

A Phosphoserine modification is found at serine 162. Basic and acidic residues predominate over residues 166–184 (RELEERAQLENEIEGKNEE). A disordered region spans residues 166-194 (RELEERAQLENEIEGKNEETPQNEKPPAY).

Belongs to the eukaryotic RPB7/RPC8 RNA polymerase subunit family. As to quaternary structure, component of the RNA polymerase III (Pol III) complex consisting of 17 subunits. RPC25/RPC8 and RPC17/RPC9 form a Pol III subcomplex.

The protein localises to the nucleus. Functionally, DNA-dependent RNA polymerase catalyzes the transcription of DNA into RNA using the four ribonucleoside triphosphates as substrates. Specific peripheric component of RNA polymerase III which synthesizes small RNAs, such as 5S rRNA and tRNA. The RPC25/RPC8-RPC17/RPC9 subcomplex may bind Pol III transcripts emerging from the adjacent exit pore during elongation. This Saccharomyces cerevisiae (strain ATCC 204508 / S288c) (Baker's yeast) protein is DNA-directed RNA polymerase III subunit RPC8 (RPC25).